Here is a 176-residue protein sequence, read N- to C-terminus: Large ribosomal subunit protein uL6 (176 aa).

The protein belongs to the universal ribosomal protein uL6 family. In terms of assembly, part of the 50S ribosomal subunit.

Functionally, this protein binds to the 23S rRNA, and is important in its secondary structure. It is located near the subunit interface in the base of the L7/L12 stalk, and near the tRNA binding site of the peptidyltransferase center. The chain is Large ribosomal subunit protein uL6 from Burkholderia multivorans (strain ATCC 17616 / 249).